We begin with the raw amino-acid sequence, 233 residues long: Small ribosomal subunit protein uS2 (233 aa).

It belongs to the universal ribosomal protein uS2 family.

This chain is Small ribosomal subunit protein uS2, found in Clostridium novyi (strain NT).